The primary structure comprises 880 residues: MTSVEPNVYDPQQVESAAQQYWDATRAFEVDEASDKPKYYCLSMLPYPSGALHMGHVRNYTIGDVISRYKRMTGHNVLQPMGWDAFGLPAENAAIKNKTAPAAWTYKNIDHMRTQLKSLGYAIDWSREFATCRPDYYVHEQRMFTRLMRKGLAYRRNAVVNWDPVDQTVLANEQVIDGRGWRSGALVEKREIPQWFLRITDYAQELLDGLDELDGWPESVKTMQRNWIGRSEGLEIQFDVRDVDGGVLDPLRVFTTRPDTVMGVTFVSIAAEHPLALHAAKNNPELAALLADLKQGGVSEAELETQEKRGMDTGLRAIHPVTGEQVPVWVANFVLMGYGTGAVMAVPGHDQRDNEVANKYGLPIVQVIALKDPRSEEERSWDATRWQDWYSDKSRAFELVNSAEFDGLDFQGAFEALAERFERKAQGQRRVNYRLRDWGVSRQRYWGCPIPVIYCAKCGAVPVPEEQLPVVLPEDVAFAGTGSPIKTDPEWRKTTCPECGGAAERETDTFDTFMESSWYYARYTSPGARDAVDKRGNYWLPVDQYIGGIEHAILHLMYFRFYHKLLRDARMVDSNEPARNLLCQGMVIAETYYRPNPDGSRDWINPADVDVQRDERGRITGATLIADGQPVVVGGTEKMSKSKNNGVDPQAMVGKYGADTVRLFSMFAAPPEQSLEWNEAGVDGMARFLRRLWAQVQKHAADGAAPALDVAVLDASQKALRRKTHETIGKVGDDYGRRHSFNTAIAAVMELMNALAKFDDGSDQGRAVRQEALQAIVLLLNPITPHASHTLWQVLGHGETLLEDQPFPQADAAALVRDALTLAVQVNGKLRGTIEVAADAPREQVEALALAEPNAAKFMEGLTVRKIIIVPGKIVNIVVA.

The 'HIGH' region signature appears at 46–56 (PYPSGALHMGH). A 'KMSKS' region motif is present at residues 638-642 (KMSKS). Lys-641 contacts ATP.

It belongs to the class-I aminoacyl-tRNA synthetase family.

The protein localises to the cytoplasm. The catalysed reaction is tRNA(Leu) + L-leucine + ATP = L-leucyl-tRNA(Leu) + AMP + diphosphate. The polypeptide is Leucine--tRNA ligase (Stenotrophomonas maltophilia (strain R551-3)).